Reading from the N-terminus, the 184-residue chain is Leucine-rich repeat-containing protein 20 (184 aa).

LRR repeat units lie at residues 51–72, 75–96, 98–120, 121–141, and 145–167; these read QIHL…FMTT, QLRE…VSAL, HLKA…TALP, ALET…EKLA, and ALRS…APPL. The residue at position 175 (Ser175) is a Phosphoserine.

This chain is Leucine-rich repeat-containing protein 20 (LRRC20), found in Homo sapiens (Human).